The primary structure comprises 76 residues: Demidefensin-3 (76 aa).

An N-terminal signal peptide occupies residues 1-22 (MRTLALHTAMLLLVALHAQAEA). A propeptide spanning residues 23 to 64 (RQARADEAAAQQQPGADDQGMAHSFTWPENAALPLSESERGL) is cleaved from the precursor. Positions 25-45 (ARADEAAAQQQPGADDQGMAH) are disordered. The span at 30–44 (AAAQQQPGADDQGMA) shows a compositional bias: low complexity. Cys68 and Cys73 are disulfide-bonded. The propeptide occupies 74–76 (RLL).

It belongs to the alpha-defensin family. Theta subfamily. Forms a cyclic homodimer; disulfide-linked. Post-translationally, this is a cyclic peptide.

Functionally, has antimicrobial activities against bacteria and fungi. The polypeptide is Demidefensin-3 (Macaca mulatta (Rhesus macaque)).